The sequence spans 217 residues: Eukaryotic translation initiation factor 4E (217 aa).

A disordered region spans residues 1 to 30 (MATVEPETTPTPNPPTTEEEKTESNQEVAN). Residue Ala-2 is modified to N-acetylalanine. Residue Thr-22 is modified to Phosphothreonine. Positions 37-40 (HPLQ) are EIF4EBP1/2/3 binding. MRNA is bound at residue 56 to 57 (WQ). An EIF4EBP1/2/3 binding region spans residues 73–77 (WALYN). 102 to 103 (WE) provides a ligand contact to mRNA. Positions 132–139 (ETLLCLIG) are EIF4EBP1/2/3 binding. Residues 157–162 (RAKGDK) and 205–207 (TKS) contribute to the mRNA site. Position 209 is a phosphoserine; by PKC and MKNK2 (Ser-209).

It belongs to the eukaryotic initiation factor 4E family. In terms of assembly, eIF4F is a multi-subunit complex, the composition of which varies with external and internal environmental conditions. It is composed of at least EIF4A, EIF4E and EIF4G1/EIF4G3. EIF4E is also known to interact with other partners. Interacts with EIF4ENIF1/4E-T; promotes recruitment to P-bodies and import into the nucleus. Hypophosphorylated EIF4EBP1, EIF4EBP2 and EIF4EBP3 compete with EIF4G1/EIF4G3 to interact with EIF4E; insulin stimulated MAP-kinase (MAPK1 and MAPK3) phosphorylation of EIF4EBP1 causes dissociation of the complex allowing EIF4G1/EIF4G3 to bind and consequent initiation of translation. Interacts mutually exclusive with EIF4A1 or EIF4A2. Interacts with NGDN and PIWIL2. Component of the CYFIP1-EIF4E-FMR1 complex composed of CYFIP, EIF4E and FMR1. Interacts directly with CYFIP1. Interacts with CLOCK. Binds to MKNK2 in nucleus. Interacts with LIMD1, WTIP and AJUBA. Interacts with APOBEC3G in an RNA-dependent manner. Interacts with LARP1. Interacts with METTL3. Interacts with RBM24; this interaction prevents EIF4E from binding to p53/TP53 mRNA and inhibits the assembly of translation initiation complex. Interacts with DDX3X; interaction is direct and in an RNA-independent manner; this interaction enhances EIF4E cap-binding ability and is required for the repression of cap-dependent translation and the increase of IRES-mediated translation. DDX3X competes with EIF4G1 for interaction with EIF4E. Interacts with EIF4G1; which in a mutual exclusive interaction associates either with EIF1 or with EIF4E on a common binding site. Interacts with BTG4 and CNOT7. Interacts with LRPPRC (via N-terminus); the interaction promotes association of EIF4E with 4ESE-containing mRNAs. Interacts with mRNA cleavage enzyme CPSF3 and its cofactor CPSF1. Interacts (via RING-type zinc finger) with PML; the interaction results in conformational changes of both interacting proteins and reduces EIF4E affinity for the 5' m7G cap of mRNA, thus reducing EIF4E-mediated mRNA nuclear export. Interacts with homeobox protein HHEX/PRH; the interaction inhibits EIF4E-mediated mRNA nuclear export. Interacts with homeobox protein HOXA9; the interaction positively regulates EIF4E-mediated mRNA nuclear export. Interacts with homeobox protein EMX2. (Microbial infection) Interacts with Lassa virus Z protein. As to quaternary structure, (Microbial infection) Interacts with Lymphocytic choriomeningitis virus (LCMV) Z protein (via RING-type zinc finger); the interaction results in conformational changes of both interacting proteins and reduces EIF4E affinity for the m7G mRNA cap structure. In terms of assembly, (Microbial infection) Interacts (via cap-binding region) with potato virus Y VPg; this interaction mediates the translation of the VPg-viral RNA conjugates and interferes with the cellular EIF4E-dependent mRNA export and translation. In terms of processing, phosphorylation increases the ability of the protein to bind to mRNA caps and to form the eIF4F complex. Phosphorylation also enhances its mRNA transport function. Phosphorylation at Ser-209 is not essential for protein synthesis.

It is found in the cytoplasm. The protein localises to the P-body. Its subcellular location is the stress granule. It localises to the nucleus. The protein resides in the nucleus speckle. It is found in the nuclear body. Acts in the cytoplasm to initiate and regulate protein synthesis and is required in the nucleus for export of a subset of mRNAs from the nucleus to the cytoplasm which promotes processes such as RNA capping, processing and splicing. Component of the protein complex eIF4F, which is involved in the recognition of the mRNA cap, ATP-dependent unwinding of 5'-terminal secondary structure and recruitment of mRNA to the ribosome. This protein recognizes and binds the 7-methylguanosine (m7G)-containing mRNA cap during an early step in the initiation of protein synthesis and facilitates ribosome binding by inducing the unwinding of the mRNAs secondary structures. Together with EIF4G1, antagonizes the scanning promoted by EIF1-EIF4G1 and is required for TISU translation, a process where the TISU element recognition makes scanning unnecessary. In addition to its role in translation initiation, also acts as a regulator of translation and stability in the cytoplasm. Component of the CYFIP1-EIF4E-FMR1 complex which binds to the mRNA cap and mediates translational repression: in the complex, EIF4E mediates the binding to the mRNA cap. Component of a multiprotein complex that sequesters and represses translation of proneurogenic factors during neurogenesis. In P-bodies, component of a complex that mediates the storage of translationally inactive mRNAs in the cytoplasm and prevents their degradation. May play an important role in spermatogenesis through translational regulation of stage-specific mRNAs during germ cell development. As well as its roles in translation, also involved in mRNA nucleocytoplasmic transport. Its role in mRNA export from the nucleus to the cytoplasm relies on its ability to bind the m7G cap of RNAs and on the presence of the 50-nucleotide EIF4E sensitivity element (4ESE) in the 3'UTR of sensitive transcripts. Interaction with the 4ESE is mediated by LRPPRC which binds simultaneously to both EIF4E and the 4ESE, thereby acting as a platform for assembly for the RNA export complex. EIF4E-dependent mRNA export is independent of ongoing protein or RNA synthesis and is also NFX1-independent but is XPO1-dependent with LRPPRC interacting with XPO1 to form an EIF4E-dependent mRNA export complex. Alters the composition of the cytoplasmic face of the nuclear pore to promote RNA export by reducing RANBP2 expression, relocalizing nucleoporin NUP214 and increasing expression of RANBP1 and RNA export factors DDX19 and GLE1. Promotes the nuclear export of cyclin CCND1 mRNA. Promotes the nuclear export of NOS2/iNOS mRNA. Promotes the nuclear export of MDM2 mRNA. Promotes the export of additional mRNAs, including others involved in the cell cycle. In the nucleus, binds to capped splice factor-encoding mRNAs and stimulates their nuclear export to enhance splice factor production by increasing their cytoplasmic availability to the translation machinery. May also regulate splicing through interaction with the spliceosome in an RNA and m7G cap-dependent manner. Also binds to some pre-mRNAs and may play a role in their recruitment to the spliceosome. Promotes steady-state capping of a subset of coding and non-coding RNAs by mediating nuclear export of capping machinery mRNAs including RNMT, RNGTT and RAMAC to enhance their translation. Stimulates mRNA 3'-end processing by promoting the expression of several core cleavage complex factors required for mRNA cleavage and polyadenylation, and may also have a direct effect through its interaction with the CPSF3 cleavage enzyme. Rescues cells from apoptosis by promoting activation of serine/threonine-protein kinase AKT1 through mRNA export of NBS1 which potentiates AKT1 phosphorylation and also through mRNA export of AKT1 effectors, allowing for increased production of these proteins. This Homo sapiens (Human) protein is Eukaryotic translation initiation factor 4E.